An 853-amino-acid chain; its full sequence is Translation initiation factor IF-2 (853 aa).

Disordered stretches follow at residues 1–68 (MSDT…ASDG) and 94–265 (LEQR…DKTS). Polar residues predominate over residues 20–32 (RKTSGTVKQSFSH). Residues 94–161 (LEQRKAEEAS…ASREAVERPS (68 aa)) show a composition bias toward basic and acidic residues. The segment covering 163 to 176 (APRAAPAAQTPPAA) has biased composition (low complexity). Basic and acidic residues-rich tracts occupy residues 196–219 (PARDDRADRAREVATKPSRGDAER) and 245–265 (RARERERERRVGGGDSNDKTS). The tr-type G domain occupies 347 to 515 (PRAPIVTIMG…AISIQAEILE (169 aa)). Residues 356–363 (GHVDHGKT) form a G1 region. Residue 356–363 (GHVDHGKT) participates in GTP binding. The tract at residues 381–385 (GITQH) is G2. Residues 403–406 (DTPG) are G3. GTP contacts are provided by residues 403–407 (DTPGH) and 457–460 (TKSD). The G4 stretch occupies residues 457 to 460 (TKSD). The interval 493 to 495 (SAK) is G5.

It belongs to the TRAFAC class translation factor GTPase superfamily. Classic translation factor GTPase family. IF-2 subfamily.

Its subcellular location is the cytoplasm. In terms of biological role, one of the essential components for the initiation of protein synthesis. Protects formylmethionyl-tRNA from spontaneous hydrolysis and promotes its binding to the 30S ribosomal subunits. Also involved in the hydrolysis of GTP during the formation of the 70S ribosomal complex. This Hyphomonas neptunium (strain ATCC 15444) protein is Translation initiation factor IF-2.